The chain runs to 659 residues: tRNA-guanine(15) transglycosylase (659 aa).

Aspartate 84 serves as the catalytic Nucleophile. The substrate site is built by aspartate 119 and alanine 190. Zn(2+)-binding residues include cysteine 273, cysteine 275, and cysteine 278. Positions lysine 583–lysine 658 constitute a PUA domain.

It belongs to the archaeosine tRNA-ribosyltransferase family. Zn(2+) serves as cofactor.

The enzyme catalyses guanosine(15) in tRNA + 7-cyano-7-deazaguanine = 7-cyano-7-carbaguanosine(15) in tRNA + guanine. It functions in the pathway tRNA modification; archaeosine-tRNA biosynthesis. Its function is as follows. Exchanges the guanine residue with 7-cyano-7-deazaguanine (preQ0) at position 15 in the dihydrouridine loop (D-loop) of archaeal tRNAs. This is tRNA-guanine(15) transglycosylase from Methanobrevibacter smithii (strain ATCC 35061 / DSM 861 / OCM 144 / PS).